Reading from the N-terminus, the 439-residue chain is Xylose isomerase (439 aa).

Active-site residues include H101 and D104. Mg(2+)-binding residues include E232, E268, H271, D296, D307, D309, and D339.

Belongs to the xylose isomerase family. As to quaternary structure, homotetramer. Mg(2+) serves as cofactor.

It is found in the cytoplasm. It catalyses the reaction alpha-D-xylose = alpha-D-xylulofuranose. In Haemophilus influenzae (strain 86-028NP), this protein is Xylose isomerase.